A 318-amino-acid polypeptide reads, in one-letter code: MKNTFSWIKKEITRSISLSLMIYIITRTSISNAYPIFAQQGYENPREATGRIVCANCHLANKPVDIEVPQAVLPDTVFEAVVRIPYDRQVKQVLANGKKGGLNVGAVLILPEGFELAPPARISPEMKERIGNPSFQSYRPTKKNILVIGPVPGQKYSEITFPILSPDPATNKDVHFLKYPIYVGGNRGRGQIYPDGSKSNNTVYNATAAGIVSKIIRKEKGGYEITITDASDGRQVVDIIPSGPELLVSEGESIKLDQPLTSNPNVGGFGQGDAEVVLQDPLRVQGLLFFLASVILAQIFLVLKKKQFEKVQLSEMNF.

The N-terminal stretch at 1–33 is a signal peptide; that stretch reads MKNTFSWIKKEITRSISLSLMIYIITRTSISNA. Y34, C54, C57, and H58 together coordinate heme. A helical membrane pass occupies residues 284-304; the sequence is VQGLLFFLASVILAQIFLVLK.

The protein belongs to the cytochrome f family. The 4 large subunits of the cytochrome b6-f complex are cytochrome b6, subunit IV (17 kDa polypeptide, petD), cytochrome f and the Rieske protein, while the 4 small subunits are PetG, PetL, PetM and PetN. The complex functions as a dimer. Heme is required as a cofactor.

The protein localises to the plastid. The protein resides in the chloroplast thylakoid membrane. Component of the cytochrome b6-f complex, which mediates electron transfer between photosystem II (PSII) and photosystem I (PSI), cyclic electron flow around PSI, and state transitions. This is Cytochrome f from Oenothera biennis (German evening primrose).